Here is a 376-residue protein sequence, read N- to C-terminus: Bifunctional enzyme IspD/IspF (376 aa).

Positions 1–220 (MRIAAILVAG…RSMSISMIPR (220 aa)) are 2-C-methyl-D-erythritol 4-phosphate cytidylyltransferase. Residues 220-376 (RIGTGYDVHA…QAAVIIMIPA (157 aa)) form a 2-C-methyl-D-erythritol 2,4-cyclodiphosphate synthase region. Positions 226 and 228 each coordinate a divalent metal cation. 4-CDP-2-C-methyl-D-erythritol 2-phosphate-binding positions include 226–228 (DVH) and 252–253 (HS). His-260 is an a divalent metal cation binding site. 4-CDP-2-C-methyl-D-erythritol 2-phosphate is bound by residues 274–276 (DIG), 350–353 (TTSE), Phe-357, and Arg-360.

In the N-terminal section; belongs to the IspD/TarI cytidylyltransferase family. IspD subfamily. This sequence in the C-terminal section; belongs to the IspF family. The cofactor is a divalent metal cation.

The catalysed reaction is 2-C-methyl-D-erythritol 4-phosphate + CTP + H(+) = 4-CDP-2-C-methyl-D-erythritol + diphosphate. It catalyses the reaction 4-CDP-2-C-methyl-D-erythritol 2-phosphate = 2-C-methyl-D-erythritol 2,4-cyclic diphosphate + CMP. Its pathway is isoprenoid biosynthesis; isopentenyl diphosphate biosynthesis via DXP pathway; isopentenyl diphosphate from 1-deoxy-D-xylulose 5-phosphate: step 2/6. The protein operates within isoprenoid biosynthesis; isopentenyl diphosphate biosynthesis via DXP pathway; isopentenyl diphosphate from 1-deoxy-D-xylulose 5-phosphate: step 4/6. In terms of biological role, bifunctional enzyme that catalyzes the formation of 4-diphosphocytidyl-2-C-methyl-D-erythritol from CTP and 2-C-methyl-D-erythritol 4-phosphate (MEP) (IspD), and catalyzes the conversion of 4-diphosphocytidyl-2-C-methyl-D-erythritol 2-phosphate (CDP-ME2P) to 2-C-methyl-D-erythritol 2,4-cyclodiphosphate (ME-CPP) with a corresponding release of cytidine 5-monophosphate (CMP) (IspF). This Granulibacter bethesdensis (strain ATCC BAA-1260 / CGDNIH1) protein is Bifunctional enzyme IspD/IspF.